The chain runs to 1394 residues: DNA-directed RNA polymerase subunit beta' (1394 aa).

Zn(2+) contacts are provided by C71, C73, C86, and C89. Residues D462, D464, and D466 each coordinate Mg(2+). The Zn(2+) site is built by C810, C884, C891, and C894.

Belongs to the RNA polymerase beta' chain family. The RNAP catalytic core consists of 2 alpha, 1 beta, 1 beta' and 1 omega subunit. When a sigma factor is associated with the core the holoenzyme is formed, which can initiate transcription. The cofactor is Mg(2+). Requires Zn(2+) as cofactor.

It carries out the reaction RNA(n) + a ribonucleoside 5'-triphosphate = RNA(n+1) + diphosphate. Functionally, DNA-dependent RNA polymerase catalyzes the transcription of DNA into RNA using the four ribonucleoside triphosphates as substrates. This Caulobacter sp. (strain K31) protein is DNA-directed RNA polymerase subunit beta'.